The sequence spans 235 residues: Secreted RxLR effector protein 27 (235 aa).

The signal sequence occupies residues 1–25 (MTNLFTRHTRRSLTALALLSGGVYA). Positions 36 to 60 (RSLRVFVTGGQVLWDYRIHFKGIER) match the RxLR-dEER motif.

This sequence belongs to the RxLR effector family.

It is found in the secreted. It localises to the host cytoplasm. The protein localises to the host nucleus. In terms of biological role, effector that acts as a broad suppressor of cell death to interrupt plant immunity. Inhibits cell death induced by cell death-inducing proteins, including the PAMP elicitor INF1 from P.infestans. This Plasmopara viticola (Downy mildew of grapevine) protein is Secreted RxLR effector protein 27.